The sequence spans 214 residues: Putative pyrophosphatase PpaX (214 aa).

Aspartate 8 acts as the Nucleophile in catalysis.

This sequence belongs to the HAD-like hydrolase superfamily. PpaX family. Mg(2+) serves as cofactor.

It carries out the reaction diphosphate + H2O = 2 phosphate + H(+). This chain is Putative pyrophosphatase PpaX, found in Clostridium perfringens (strain 13 / Type A).